A 96-amino-acid chain; its full sequence is Co-chaperonin GroES 1 (96 aa).

Belongs to the GroES chaperonin family. Heptamer of 7 subunits arranged in a ring. Interacts with the chaperonin GroEL.

Its subcellular location is the cytoplasm. Together with the chaperonin GroEL, plays an essential role in assisting protein folding. The GroEL-GroES system forms a nano-cage that allows encapsulation of the non-native substrate proteins and provides a physical environment optimized to promote and accelerate protein folding. GroES binds to the apical surface of the GroEL ring, thereby capping the opening of the GroEL channel. The sequence is that of Co-chaperonin GroES 1 from Vibrio vulnificus (strain CMCP6).